Reading from the N-terminus, the 779-residue chain is ATP-dependent RNA helicase SUPV3L1, mitochondrial (779 aa).

Residues 1–40 (MSLPRCTLLWARLPAGRGAGPRAAPCSALRALVGSFPGAS) constitute a mitochondrion transit peptide. Position 99 is an N6-acetyllysine (Lys99). Residues 194–334 (EARARQRKII…AINLVSELLY (141 aa)) form the Helicase ATP-binding domain. Residue 207–214 (GPTNSGKT) participates in ATP binding. The 169-residue stretch at 353-521 (VLDHALESLD…PTAEQIEMFA (169 aa)) folds into the Helicase C-terminal domain. The interaction with LAMTOR5, important for protein stability stretch occupies residues 650-779 (PDSSLVRSLQ…RRKKKDPDSD (130 aa)). The span at 693 to 703 (SGDQSRLSGAS) shows a compositional bias: polar residues. Disordered stretches follow at residues 693–732 (SGDQSRLSGASKSPARRTRGTKSAGNKATEPLSPSDKELP) and 754–779 (EWLTQQPEHSREKVGTRRKKKDPDSD). Ser725 is modified (phosphoserine). The segment covering 761–779 (EHSREKVGTRRKKKDPDSD) has biased composition (basic and acidic residues).

It belongs to the helicase family. Homodimer; in free form. Component of the mitochondrial degradosome (mtEXO) complex which is a heteropentamer containing 2 copies of SUPV3L1 and 3 copies of PNPT1. As part of mitochondrial degradosome complex, interacts with GRSF1 in a RNA-dependent manner; the interaction enhances the activity of the complex. Interacts with LAMTOR5/HBXIP, WRN and BLM. The cofactor is Mg(2+). Requires Mn(2+) as cofactor.

The protein localises to the nucleus. Its subcellular location is the mitochondrion matrix. The protein resides in the mitochondrion nucleoid. The enzyme catalyses ATP + H2O = ADP + phosphate + H(+). Helicase activity toward DNA substrate is inhibited by micromolar concentrations of 5,6-dichloro-1-(beta-D-ribofuranosyl)benzotriazole (DRBT) and 4,5,6,7-tetrabromobenzotriazole (TBBT). Helicase activity toward RNA substrate is inhibited by elevated concentrations of TBBT. Inhibited by some ring-expanded nucleoside analogs. In terms of biological role, major helicase player in mitochondrial RNA metabolism. Component of the mitochondrial degradosome (mtEXO) complex, that degrades 3' overhang double-stranded RNA with a 3'-to-5' directionality in an ATP-dependent manner. Involved in the degradation of non-coding mitochondrial transcripts (MT-ncRNA) and tRNA-like molecules. ATPase and ATP-dependent multisubstrate helicase, able to unwind double-stranded (ds) DNA and RNA, and RNA/DNA heteroduplexes in the 5'-to-3' direction. Plays a role in the RNA surveillance system in mitochondria; regulates the stability of mature mRNAs, the removal of aberrantly formed mRNAs and the rapid degradation of non coding processing intermediates. Also implicated in recombination and chromatin maintenance pathways. May protect cells from apoptosis. Associates with mitochondrial DNA. This is ATP-dependent RNA helicase SUPV3L1, mitochondrial (Supv3l1) from Mus musculus (Mouse).